A 181-amino-acid polypeptide reads, in one-letter code: Large ribosomal subunit protein uL5c (181 aa).

The protein belongs to the universal ribosomal protein uL5 family. Part of the 50S ribosomal subunit; contacts the 5S rRNA.

Its subcellular location is the plastid. It is found in the chloroplast. In terms of biological role, binds 5S rRNA, forms part of the central protuberance of the 50S subunit. This is Large ribosomal subunit protein uL5c (rpl5) from Heterosigma akashiwo (strain NIES-293 / 8280G21-1).